Here is a 410-residue protein sequence, read N- to C-terminus: Multifunctional CCA protein (410 aa).

ATP is bound by residues glycine 8 and arginine 11. Positions 8 and 11 each coordinate CTP. Mg(2+) is bound by residues aspartate 21 and aspartate 23. 3 residues coordinate ATP: arginine 91, arginine 138, and arginine 141. CTP-binding residues include arginine 91, arginine 138, and arginine 141. Residues 229–347 (TGIHQEMVSD…AQLALVCEAD (119 aa)) enclose the HD domain.

This sequence belongs to the tRNA nucleotidyltransferase/poly(A) polymerase family. Bacterial CCA-adding enzyme type 1 subfamily. In terms of assembly, monomer. Can also form homodimers and oligomers. Mg(2+) serves as cofactor. The cofactor is Ni(2+).

It catalyses the reaction a tRNA precursor + 2 CTP + ATP = a tRNA with a 3' CCA end + 3 diphosphate. The catalysed reaction is a tRNA with a 3' CCA end + 2 CTP + ATP = a tRNA with a 3' CCACCA end + 3 diphosphate. Its function is as follows. Catalyzes the addition and repair of the essential 3'-terminal CCA sequence in tRNAs without using a nucleic acid template. Adds these three nucleotides in the order of C, C, and A to the tRNA nucleotide-73, using CTP and ATP as substrates and producing inorganic pyrophosphate. tRNA 3'-terminal CCA addition is required both for tRNA processing and repair. Also involved in tRNA surveillance by mediating tandem CCA addition to generate a CCACCA at the 3' terminus of unstable tRNAs. While stable tRNAs receive only 3'-terminal CCA, unstable tRNAs are marked with CCACCA and rapidly degraded. This chain is Multifunctional CCA protein, found in Xanthomonas axonopodis pv. citri (strain 306).